The sequence spans 233 residues: Sugar fermentation stimulation protein homolog (233 aa).

Belongs to the SfsA family.

In Rhodospirillum centenum (strain ATCC 51521 / SW), this protein is Sugar fermentation stimulation protein homolog.